Consider the following 642-residue polypeptide: Threonine--tRNA ligase (642 aa).

A TGS domain is found at M1–D61. The tract at residues D243–P534 is catalytic. C334, H385, and H511 together coordinate Zn(2+).

The protein belongs to the class-II aminoacyl-tRNA synthetase family. Homodimer. The cofactor is Zn(2+).

It is found in the cytoplasm. It catalyses the reaction tRNA(Thr) + L-threonine + ATP = L-threonyl-tRNA(Thr) + AMP + diphosphate + H(+). Catalyzes the attachment of threonine to tRNA(Thr) in a two-step reaction: L-threonine is first activated by ATP to form Thr-AMP and then transferred to the acceptor end of tRNA(Thr). Also edits incorrectly charged L-seryl-tRNA(Thr). The protein is Threonine--tRNA ligase of Buchnera aphidicola subsp. Acyrthosiphon pisum (strain 5A).